We begin with the raw amino-acid sequence, 90 residues long: Nodulation protein F (90 aa).

In terms of domain architecture, Carrier spans 4–89 (QLESEIIGII…RHSGSHPRLA (86 aa)). Ser-46 is subject to O-(pantetheine 4'-phosphoryl)serine. The disordered stretch occupies residues 65–90 (RDEHGRGVVGSPERRRHSGSHPRLAH). Residues 78–90 (RRRHSGSHPRLAH) are compositionally biased toward basic residues.

4'-phosphopantetheine is transferred from CoA to a specific serine of apo-NodF.

Functionally, proposed to synthesize nod factor fatty acyl chain. Involved in trans-2,trans-4,trans-6,cis-11-octadecatetraenoic acid biosynthesis. This chain is Nodulation protein F (nodF), found in Rhizobium meliloti (Ensifer meliloti).